Consider the following 511-residue polypeptide: 2,3-bisphosphoglycerate-independent phosphoglycerate mutase (511 aa).

Positions 14 and 64 each coordinate Mn(2+). The active-site Phosphoserine intermediate is the Ser64. Residues His125, 155–156 (RD), Arg187, Arg193, 259–262 (RADR), and Lys333 each bind substrate. Residues Asp400, His404, Asp441, His442, and His460 each contribute to the Mn(2+) site.

The protein belongs to the BPG-independent phosphoglycerate mutase family. Monomer. Mn(2+) is required as a cofactor.

The catalysed reaction is (2R)-2-phosphoglycerate = (2R)-3-phosphoglycerate. It functions in the pathway carbohydrate degradation; glycolysis; pyruvate from D-glyceraldehyde 3-phosphate: step 3/5. Functionally, catalyzes the interconversion of 2-phosphoglycerate and 3-phosphoglycerate. This Pseudoalteromonas atlantica (strain T6c / ATCC BAA-1087) protein is 2,3-bisphosphoglycerate-independent phosphoglycerate mutase.